The chain runs to 223 residues: Deoxyribose-phosphate aldolase (223 aa).

Asp89 (proton donor/acceptor) is an active-site residue. Catalysis depends on Lys152, which acts as the Schiff-base intermediate with acetaldehyde. The Proton donor/acceptor role is filled by Lys181.

It belongs to the DeoC/FbaB aldolase family. DeoC type 1 subfamily.

The protein localises to the cytoplasm. The enzyme catalyses 2-deoxy-D-ribose 5-phosphate = D-glyceraldehyde 3-phosphate + acetaldehyde. It participates in carbohydrate degradation; 2-deoxy-D-ribose 1-phosphate degradation; D-glyceraldehyde 3-phosphate and acetaldehyde from 2-deoxy-alpha-D-ribose 1-phosphate: step 2/2. Catalyzes a reversible aldol reaction between acetaldehyde and D-glyceraldehyde 3-phosphate to generate 2-deoxy-D-ribose 5-phosphate. In Bacillus mycoides (strain KBAB4) (Bacillus weihenstephanensis), this protein is Deoxyribose-phosphate aldolase.